A 228-amino-acid chain; its full sequence is Orotidine 5'-phosphate decarboxylase (228 aa).

Substrate contacts are provided by residues D20, K42, 70-79 (DFKVADIPET), S127, 180-190 (PGVGAQGGDPG), G202, and R203. The active-site Proton donor is the K72.

Belongs to the OMP decarboxylase family. Type 1 subfamily. Homodimer.

The catalysed reaction is orotidine 5'-phosphate + H(+) = UMP + CO2. The protein operates within pyrimidine metabolism; UMP biosynthesis via de novo pathway; UMP from orotate: step 2/2. Its function is as follows. Catalyzes the decarboxylation of orotidine 5'-monophosphate (OMP) to uridine 5'-monophosphate (UMP). In Methanothermobacter thermautotrophicus (strain ATCC 29096 / DSM 1053 / JCM 10044 / NBRC 100330 / Delta H) (Methanobacterium thermoautotrophicum), this protein is Orotidine 5'-phosphate decarboxylase (pyrF).